The following is an 865-amino-acid chain: Protein translocase subunit SecA (865 aa).

Residues Gln-93, 111–115, and Asp-501 contribute to the ATP site; that span reads GEGKT. Positions 841, 843, 852, and 853 each coordinate Zn(2+).

This sequence belongs to the SecA family. In terms of assembly, monomer and homodimer. Part of the essential Sec protein translocation apparatus which comprises SecA, SecYEG and auxiliary proteins SecDF-YajC and YidC. Zn(2+) serves as cofactor.

It localises to the cell inner membrane. The protein localises to the cytoplasm. It catalyses the reaction ATP + H2O + cellular proteinSide 1 = ADP + phosphate + cellular proteinSide 2.. Its function is as follows. Part of the Sec protein translocase complex. Interacts with the SecYEG preprotein conducting channel. Has a central role in coupling the hydrolysis of ATP to the transfer of proteins into and across the cell membrane, serving as an ATP-driven molecular motor driving the stepwise translocation of polypeptide chains across the membrane. The sequence is that of Protein translocase subunit SecA from Helicobacter pylori (strain HPAG1).